Reading from the N-terminus, the 179-residue chain is Peroxiredoxin (179 aa).

Residues 2–152 (TMEKQVPIVT…VEGWFEEEGF (151 aa)) enclose the Thioredoxin domain. The Cysteine sulfenic acid (-SOH) intermediate (for peroxiredoxin activity) role is filled by Cys56.

It belongs to the peroxiredoxin family. Prx5 subfamily. Monomer.

The catalysed reaction is a hydroperoxide + 2 glutathione = an alcohol + glutathione disulfide + H2O. Its function is as follows. Thiol-specific peroxidase that catalyzes the reduction of hydrogen peroxide and organic hydroperoxides to water and alcohols, respectively. Plays a role in cell protection against oxidative stress by detoxifying peroxides. This Rhizobium etli protein is Peroxiredoxin.